Consider the following 176-residue polypeptide: Nucleoside triphosphate/diphosphate phosphatase (176 aa).

Residue Arg23 is the Proton donor of the active site. Residues Asn87, Asp103, Asp105, Asp107, Asp120, and Glu123 each contribute to the Mg(2+) site.

This sequence belongs to the Ntdp family. It depends on Mg(2+) as a cofactor.

It catalyses the reaction a ribonucleoside 5'-triphosphate + H2O = a ribonucleoside 5'-diphosphate + phosphate + H(+). It carries out the reaction a ribonucleoside 5'-diphosphate + H2O = a ribonucleoside 5'-phosphate + phosphate + H(+). Functionally, has nucleoside phosphatase activity towards nucleoside triphosphates and nucleoside diphosphates. This is Nucleoside triphosphate/diphosphate phosphatase from Lactococcus lactis subsp. cremoris (strain MG1363).